A 376-amino-acid chain; its full sequence is Peroxisomal targeting signal 2 receptor (376 aa).

WD repeat units lie at residues 58 to 98, 102 to 142, 182 to 222, 226 to 267, 279 to 319, and 339 to 376; these read DTQD…YPVM, EHQR…NTSL, DNND…PLFM, AHNG…PNVH, GHEF…TSRV, and AHTE…QRLQ.

It belongs to the WD repeat peroxin-7 family. In terms of assembly, interacts with PEX20. Post-translationally, polyubiquitinated, leading to its degradation by the proteasome. Ubiquitination is dependent of PEX5 and PEX20 and takes place following recycling into the cytosol.

The protein localises to the cytoplasm. It is found in the cytosol. Its subcellular location is the peroxisome matrix. In terms of biological role, receptor required for the peroxisomal import of proteins containing a C-terminal PTS2-type peroxisomal targeting signal, such as 3-oxoacyl-CoA thiolase. Specifically binds to cargo proteins containing a PTS2 peroxisomal targeting signal in the cytosol. Cargo protein-binding triggers interaction with PEX20 and formation of a ternary complex composed of PEX20 and PEX7 along with PTS2-containing cargo proteins, which is tranlocated into peroxisomes by passing through the peroxisomal docking complex. PEX7 receptor is then retrotranslocated into the cytosol, where it is ubiquitinated and degraded. This chain is Peroxisomal targeting signal 2 receptor, found in Komagataella phaffii (strain GS115 / ATCC 20864) (Yeast).